We begin with the raw amino-acid sequence, 120 residues long: uncharacterized protein (120 aa).

It belongs to the asp23 family.

This is an uncharacterized protein from Bacillus subtilis (strain 168).